An 89-amino-acid chain; its full sequence is Small ribosomal subunit protein uS15 (89 aa).

It belongs to the universal ribosomal protein uS15 family. Part of the 30S ribosomal subunit. Forms a bridge to the 50S subunit in the 70S ribosome, contacting the 23S rRNA.

Its function is as follows. One of the primary rRNA binding proteins, it binds directly to 16S rRNA where it helps nucleate assembly of the platform of the 30S subunit by binding and bridging several RNA helices of the 16S rRNA. Functionally, forms an intersubunit bridge (bridge B4) with the 23S rRNA of the 50S subunit in the ribosome. In Limosilactobacillus fermentum (strain NBRC 3956 / LMG 18251) (Lactobacillus fermentum), this protein is Small ribosomal subunit protein uS15.